Here is a 179-residue protein sequence, read N- to C-terminus: Large ribosomal subunit protein uL6 (179 aa).

It belongs to the universal ribosomal protein uL6 family. In terms of assembly, part of the 50S ribosomal subunit.

In terms of biological role, this protein binds to the 23S rRNA, and is important in its secondary structure. It is located near the subunit interface in the base of the L7/L12 stalk, and near the tRNA binding site of the peptidyltransferase center. This chain is Large ribosomal subunit protein uL6, found in Mycolicibacterium vanbaalenii (strain DSM 7251 / JCM 13017 / BCRC 16820 / KCTC 9966 / NRRL B-24157 / PYR-1) (Mycobacterium vanbaalenii).